Consider the following 232-residue polypeptide: 2-C-methyl-D-erythritol 4-phosphate cytidylyltransferase (232 aa).

The protein belongs to the IspD/TarI cytidylyltransferase family. IspD subfamily.

It carries out the reaction 2-C-methyl-D-erythritol 4-phosphate + CTP + H(+) = 4-CDP-2-C-methyl-D-erythritol + diphosphate. Its pathway is isoprenoid biosynthesis; isopentenyl diphosphate biosynthesis via DXP pathway; isopentenyl diphosphate from 1-deoxy-D-xylulose 5-phosphate: step 2/6. Functionally, catalyzes the formation of 4-diphosphocytidyl-2-C-methyl-D-erythritol from CTP and 2-C-methyl-D-erythritol 4-phosphate (MEP). This chain is 2-C-methyl-D-erythritol 4-phosphate cytidylyltransferase, found in Nitrosospira multiformis (strain ATCC 25196 / NCIMB 11849 / C 71).